The sequence spans 87 residues: Putative septation protein SpoVG (87 aa).

The protein belongs to the SpoVG family.

Could be involved in septation. The sequence is that of Putative septation protein SpoVG from Agathobacter rectalis (strain ATCC 33656 / DSM 3377 / JCM 17463 / KCTC 5835 / VPI 0990) (Eubacterium rectale).